A 327-amino-acid polypeptide reads, in one-letter code: Glycerol-3-phosphate dehydrogenase [NAD(P)+] (327 aa).

NADPH is bound by residues tryptophan 13, histidine 33, and lysine 102. The sn-glycerol 3-phosphate site is built by lysine 102, glycine 130, and serine 132. Residue alanine 134 participates in NADPH binding. Sn-glycerol 3-phosphate-binding residues include lysine 185, aspartate 238, serine 248, arginine 249, and asparagine 250. The active-site Proton acceptor is the lysine 185. Arginine 249 contacts NADPH. An NADPH-binding site is contributed by glutamate 275.

It belongs to the NAD-dependent glycerol-3-phosphate dehydrogenase family.

Its subcellular location is the cytoplasm. The enzyme catalyses sn-glycerol 3-phosphate + NAD(+) = dihydroxyacetone phosphate + NADH + H(+). The catalysed reaction is sn-glycerol 3-phosphate + NADP(+) = dihydroxyacetone phosphate + NADPH + H(+). Its pathway is membrane lipid metabolism; glycerophospholipid metabolism. Functionally, catalyzes the reduction of the glycolytic intermediate dihydroxyacetone phosphate (DHAP) to sn-glycerol 3-phosphate (G3P), the key precursor for phospholipid synthesis. This Vesicomyosocius okutanii subsp. Calyptogena okutanii (strain HA) protein is Glycerol-3-phosphate dehydrogenase [NAD(P)+].